A 1122-amino-acid chain; its full sequence is Transcription-repair-coupling factor (1122 aa).

Residues 593 to 758 (DLRNGMLMDR…MTGLKELSII (166 aa)) enclose the Helicase ATP-binding domain. ATP is bound at residue 606–613 (GDVGFGKT). A DEEQ box motif is present at residues 711–714 (DEEQ). The 155-residue stretch at 779–933 (IIRDALLREH…GFTIASRDMD (155 aa)) folds into the Helicase C-terminal domain.

It in the N-terminal section; belongs to the UvrB family. The protein in the C-terminal section; belongs to the helicase family. RecG subfamily.

The protein localises to the cytoplasm. In terms of biological role, couples transcription and DNA repair by recognizing RNA polymerase (RNAP) stalled at DNA lesions. Mediates ATP-dependent release of RNAP and its truncated transcript from the DNA, and recruitment of nucleotide excision repair machinery to the damaged site. The polypeptide is Transcription-repair-coupling factor (Rickettsia conorii (strain ATCC VR-613 / Malish 7)).